The chain runs to 779 residues: Transcription factor SPT20 homolog (779 aa).

A Phosphoserine modification is found at Ser-296. Disordered stretches follow at residues 373-392 and 420-507; these read DEES…DHSN and PVKM…IPRK. The segment covering 424–437 has biased composition (low complexity); that stretch reads SHSSSGSASLSQVS. Polar residues predominate over residues 445-454; sequence TETVSVQSSV. The segment covering 470–479 has biased composition (low complexity); it reads SSSGNSSSGN. Phosphothreonine is present on Thr-494. Phosphoserine is present on residues Ser-519 and Ser-524. 2 disordered regions span residues 641-677 and 755-779; these read QLSQ…EQAL and LHHH…TPKF. Residues 755–771 are compositionally biased toward basic residues; it reads LHHHRHTGSQSKSKMKR.

This sequence belongs to the SPT20 family. Interacts with MAPK14. Interacts with ATG9A. As to expression, highly expressed in testis, moderately in brain and pituitary gland. Expressed in several fetal tissues, including lung, brain, thymus and kidney. Expression is down-regulated in malignant prostate tissues.

The protein localises to the nucleus. Required for MAP kinase p38 (MAPK11, MAPK12, MAPK13 and/or MAPK14) activation during gastrulation. Required for down-regulation of E-cadherin during gastrulation by regulating E-cadherin protein level downstream from NCK-interacting kinase (NIK) and independently of the regulation of transcription by FGF signaling and Snail. Required for starvation-induced ATG9A trafficking during autophagy. The sequence is that of Transcription factor SPT20 homolog (SUPT20H) from Homo sapiens (Human).